The primary structure comprises 324 residues: Acetyl-coenzyme A carboxylase carboxyl transferase subunit alpha (324 aa).

The CoA carboxyltransferase C-terminal domain occupies K37 to R291.

The protein belongs to the AccA family. As to quaternary structure, acetyl-CoA carboxylase is a heterohexamer composed of biotin carboxyl carrier protein (AccB), biotin carboxylase (AccC) and two subunits each of ACCase subunit alpha (AccA) and ACCase subunit beta (AccD).

The protein localises to the cytoplasm. The enzyme catalyses N(6)-carboxybiotinyl-L-lysyl-[protein] + acetyl-CoA = N(6)-biotinyl-L-lysyl-[protein] + malonyl-CoA. It functions in the pathway lipid metabolism; malonyl-CoA biosynthesis; malonyl-CoA from acetyl-CoA: step 1/1. Functionally, component of the acetyl coenzyme A carboxylase (ACC) complex. First, biotin carboxylase catalyzes the carboxylation of biotin on its carrier protein (BCCP) and then the CO(2) group is transferred by the carboxyltransferase to acetyl-CoA to form malonyl-CoA. The protein is Acetyl-coenzyme A carboxylase carboxyl transferase subunit alpha of Chlamydia pneumoniae (Chlamydophila pneumoniae).